The following is a 483-amino-acid chain: Cobyric acid synthase (483 aa).

The 188-residue stretch at 248-435 (LLKVVVPVLP…LHGLFETPAA (188 aa)) folds into the GATase cobBQ-type domain. Cysteine 329 acts as the Nucleophile in catalysis. Residue histidine 427 is part of the active site.

The protein belongs to the CobB/CobQ family. CobQ subfamily.

The protein operates within cofactor biosynthesis; adenosylcobalamin biosynthesis. Catalyzes amidations at positions B, D, E, and G on adenosylcobyrinic A,C-diamide. NH(2) groups are provided by glutamine, and one molecule of ATP is hydrogenolyzed for each amidation. In Pseudomonas fluorescens (strain ATCC BAA-477 / NRRL B-23932 / Pf-5), this protein is Cobyric acid synthase.